The sequence spans 366 residues: Chitoporin (366 aa).

A signal peptide spans 1 to 23 (MDKMFKRTVIGAAVALASTGLMA).

Belongs to the Gram-negative porin family.

The protein resides in the cell outer membrane. Involved in the uptake of chitosugars. The sequence is that of Chitoporin (chiP) from Vibrio furnissii.